Here is a 637-residue protein sequence, read N- to C-terminus: Chaperone protein HtpG (637 aa).

Residues 1–348 are a; substrate-binding; the sequence is MAEAGQMEKH…SNDLPLNVSR (348 aa). The b stretch occupies residues 349–565; the sequence is EILQDNKITR…DNDMSTQMAK (217 aa). Positions 566–637 are c; it reads LMEAAGQAVP…TRLNKLMLNA (72 aa).

This sequence belongs to the heat shock protein 90 family. In terms of assembly, homodimer.

Its subcellular location is the cytoplasm. Functionally, molecular chaperone. Has ATPase activity. This is Chaperone protein HtpG from Idiomarina loihiensis (strain ATCC BAA-735 / DSM 15497 / L2-TR).